The primary structure comprises 550 residues: Proteasome-associated ATPase (550 aa).

Positions 9–48 (EELARRVASLSAQNERLAQILVEARSKIVGLQQQIDDLAQ) form a coiled coil. 233-238 (GCGKTL) lines the ATP pocket. The interval 528-550 (KGEGKNPTPAKAIETPHNTGPYL) is disordered. The docks into pockets in the proteasome alpha-ring stretch occupies residues 549-550 (YL).

The protein belongs to the AAA ATPase family. Homohexamer. Assembles into a hexameric ring structure that caps the 20S proteasome core. Strongly interacts with the prokaryotic ubiquitin-like protein Pup through a hydrophobic interface; the interacting region of ARC lies in its N-terminal coiled-coil domain. There is one Pup binding site per ARC hexamer ring. Upon ATP-binding, the C-terminus of ARC interacts with the alpha-rings of the proteasome core, possibly by binding to the intersubunit pockets.

It functions in the pathway protein degradation; proteasomal Pup-dependent pathway. Functionally, ATPase which is responsible for recognizing, binding, unfolding and translocation of pupylated proteins into the bacterial 20S proteasome core particle. May be essential for opening the gate of the 20S proteasome via an interaction with its C-terminus, thereby allowing substrate entry and access to the site of proteolysis. Thus, the C-termini of the proteasomal ATPase may function like a 'key in a lock' to induce gate opening and therefore regulate proteolysis. This chain is Proteasome-associated ATPase, found in Jonesia denitrificans (strain ATCC 14870 / DSM 20603 / BCRC 15368 / CIP 55.134 / JCM 11481 / NBRC 15587 / NCTC 10816 / Prevot 55134) (Listeria denitrificans).